The following is a 238-amino-acid chain: uncharacterized protein (238 aa).

Belongs to the chlamydial CPn_0658/CT_538/TC_0825 family.

This is an uncharacterized protein from Chlamydia muridarum (strain MoPn / Nigg).